The chain runs to 790 residues: Nuclear cap-binding protein subunit 1 (790 aa).

Positions 1–26 (MSRRRHSYENDGGQPHKRRKTSDANE) are disordered. A Nuclear localization signal motif is present at residues 3 to 20 (RRRHSYENDGGQPHKRRK). Residue S7 is modified to Phosphoserine. A Phosphothreonine modification is found at T21. Phosphoserine is present on residues S22 and S201. Residues 28 to 240 (EDHLESLICK…CLWAQIQKLK (213 aa)) enclose the MIF4G domain. K204 carries the post-translational modification N6-acetyllysine. Positions 643–713 (STIRKMNKHV…SEQKNLFLVI (71 aa)) form a coiled coil. K684 participates in a covalent cross-link: Glycyl lysine isopeptide (Lys-Gly) (interchain with G-Cter in SUMO2). The residue at position 698 (K698) is an N6-acetyllysine.

It belongs to the NCBP1 family. In terms of assembly, component of the nuclear cap-binding complex (CBC), a heterodimer composed of NCBP1/CBP80 and NCBP2/CBP20 that interacts with m7GpppG-capped RNA. Found in a U snRNA export complex containing PHAX/RNUXA, NCBP1/CBP80, NCBP2/CBP20, RAN, XPO1 and m7G-capped RNA. Identified in a IGF2BP1-dependent mRNP granule complex containing untranslated mRNAs. Interacts with PHAX/RNUXA, SRRT/ARS2, EIF4G2, IGF2BP1, HNRNPF, HNRNPH1, KIAA0427/CTIF, PARN, DROSHA, UPF1 and ALYREF/THOC4. May interact with EIF4G1; the interaction is however controversial since it is reported by, and, but is not observed by. The large PER complex involved in the repression of transcriptional termination is composed of at least PER2, CDK9, DDX5, DHX9, NCBP1/CBP80 and POLR2A. Component of an alternative nuclear cap-binding complex (CBC) composed of NCBP1/CBP80 and NCBP3. Interacts with METTL3. Interacts with ZFC3H1 in a RNase-insensitive manner. Interacts with MTREX. Interacts with TASOR. Interacts with DHX34; the interaction is RNA-dependent. Interacts with KPNA3. In terms of processing, dephosphorylated at Thr-21 by the PNUTS-PP1 complex during RNA polymerase II transcription pause-release.

It localises to the nucleus. Its subcellular location is the cytoplasm. Functionally, component of the cap-binding complex (CBC), which binds cotranscriptionally to the 5'-cap of pre-mRNAs and is involved in various processes such as pre-mRNA splicing, translation regulation, nonsense-mediated mRNA decay, RNA-mediated gene silencing (RNAi) by microRNAs (miRNAs) and mRNA export. The CBC complex is involved in mRNA export from the nucleus via its interaction with ALYREF/THOC4/ALY, leading to the recruitment of the mRNA export machinery to the 5'-end of mRNA and to mRNA export in a 5' to 3' direction through the nuclear pore. The CBC complex is also involved in mediating U snRNA and intronless mRNAs export from the nucleus. The CBC complex is essential for a pioneer round of mRNA translation, before steady state translation when the CBC complex is replaced by cytoplasmic cap-binding protein eIF4E. The pioneer round of mRNA translation mediated by the CBC complex plays a central role in nonsense-mediated mRNA decay (NMD), NMD only taking place in mRNAs bound to the CBC complex, but not on eIF4E-bound mRNAs. The CBC complex enhances NMD in mRNAs containing at least one exon-junction complex (EJC) via its interaction with UPF1, promoting the interaction between UPF1 and UPF2. The CBC complex is also involved in 'failsafe' NMD, which is independent of the EJC complex, while it does not participate in Staufen-mediated mRNA decay (SMD). During cell proliferation, the CBC complex is also involved in microRNAs (miRNAs) biogenesis via its interaction with SRRT/ARS2 and is required for miRNA-mediated RNA interference. The CBC complex also acts as a negative regulator of PARN, thereby acting as an inhibitor of mRNA deadenylation. In the CBC complex, NCBP1/CBP80 does not bind directly capped RNAs (m7GpppG-capped RNA) but is required to stabilize the movement of the N-terminal loop of NCBP2/CBP20 and lock the CBC into a high affinity cap-binding state with the cap structure. Associates with NCBP3 to form an alternative cap-binding complex (CBC) which plays a key role in mRNA export and is particularly important in cellular stress situations such as virus infections. The conventional CBC with NCBP2 binds both small nuclear RNA (snRNA) and messenger (mRNA) and is involved in their export from the nucleus whereas the alternative CBC with NCBP3 does not bind snRNA and associates only with mRNA thereby playing a role only in mRNA export. NCBP1/CBP80 is required for cell growth and viability. The sequence is that of Nuclear cap-binding protein subunit 1 (Ncbp1) from Rattus norvegicus (Rat).